The chain runs to 462 residues: tRNA modification GTPase MnmE (462 aa).

(6S)-5-formyl-5,6,7,8-tetrahydrofolate contacts are provided by R23, E88, and R127. One can recognise a TrmE-type G domain in the interval 224–383 (GLATVIIGRP…LEKAIADLFF (160 aa)). Position 234 (N234) interacts with K(+). GTP-binding positions include 234–239 (NVGKSS), 253–259 (TDIPGTT), and 278–281 (DTAG). Residue S238 coordinates Mg(2+). Residues T253, I255, and T258 each contribute to the K(+) site. T259 serves as a coordination point for Mg(2+). K462 provides a ligand contact to (6S)-5-formyl-5,6,7,8-tetrahydrofolate.

Belongs to the TRAFAC class TrmE-Era-EngA-EngB-Septin-like GTPase superfamily. TrmE GTPase family. As to quaternary structure, homodimer. Heterotetramer of two MnmE and two MnmG subunits. K(+) serves as cofactor.

It is found in the cytoplasm. Functionally, exhibits a very high intrinsic GTPase hydrolysis rate. Involved in the addition of a carboxymethylaminomethyl (cmnm) group at the wobble position (U34) of certain tRNAs, forming tRNA-cmnm(5)s(2)U34. This is tRNA modification GTPase MnmE from Geobacillus thermodenitrificans (strain NG80-2).